The sequence spans 290 residues: Prepilin leader peptidase/N-methyltransferase (290 aa).

A helical membrane pass occupies residues 14 to 34 (LYFSLVFLFSLMIGSFLNVVI). Zn(2+)-binding residues include Cys74, Cys77, Cys99, and Cys102. The next 6 helical transmembrane spans lie at 106–126 (ISAR…AVAM), 130–150 (PGWG…LTFI), 161–181 (LTLP…FVSL), 185–205 (VIGA…FKLL), 232–252 (PIVL…LILL), and 261–281 (IPFG…GDSI).

The protein belongs to the peptidase A24 family. Zn(2+) serves as cofactor.

Its subcellular location is the cell inner membrane. The catalysed reaction is Typically cleaves a -Gly-|-Phe- bond to release an N-terminal, basic peptide of 5-8 residues from type IV prepilin, and then N-methylates the new N-terminal amino group, the methyl donor being S-adenosyl-L-methionine.. Plays an essential role in type IV pili and type II pseudopili formation by proteolytically removing the leader sequence from substrate proteins and subsequently monomethylating the alpha-amino group of the newly exposed N-terminal phenylalanine. In Aeromonas hydrophila, this protein is Prepilin leader peptidase/N-methyltransferase (tapD).